A 481-amino-acid chain; its full sequence is UDP-N-acetylmuramoyl-L-alanyl-D-glutamate--L-lysine ligase (481 aa).

Position 42 (S42) interacts with UDP-N-acetyl-alpha-D-muramoyl-L-alanyl-D-glutamate. 118-124 (GTKGKTT) is an ATP binding site. Residues Q158, 160-161 (TT), S187, and R195 each bind UDP-N-acetyl-alpha-D-muramoyl-L-alanyl-D-glutamate. Residue K229 is modified to N6-carboxylysine. The L-lysine recognition motif motif lies at 404–407 (DDPN).

It belongs to the MurCDEF family. MurE subfamily. Post-translationally, carboxylation is probably crucial for Mg(2+) binding and, consequently, for the gamma-phosphate positioning of ATP.

The protein resides in the cytoplasm. It carries out the reaction UDP-N-acetyl-alpha-D-muramoyl-L-alanyl-D-glutamate + L-lysine + ATP = UDP-N-acetyl-alpha-D-muramoyl-L-alanyl-gamma-D-glutamyl-L-lysine + ADP + phosphate + H(+). It functions in the pathway cell wall biogenesis; peptidoglycan biosynthesis. Functionally, catalyzes the addition of L-lysine to the nucleotide precursor UDP-N-acetylmuramoyl-L-alanyl-D-glutamate (UMAG) in the biosynthesis of bacterial cell-wall peptidoglycan. The chain is UDP-N-acetylmuramoyl-L-alanyl-D-glutamate--L-lysine ligase from Streptococcus pyogenes serotype M18 (strain MGAS8232).